The chain runs to 494 residues: MKEFHLLLFHGGSIFPECILILGLILLLMIDLTSDQKDTPWFYFISLTSLVMSITVLLFRWREEPMISFLGNFQTSNFSKIFRFLILLCSTLCIPLSVEYIKCTEMAITEFLLFLLTAALGGMVLCGANDLVTIFVALECFSLCSYLLSGYTKRDVRSNEATMKYLLMGGASSSILVYGFSWLYGLSGGEIELQEVVNGLINTQMYNSPGILIALISIAVGIGFKLSLVPFHQWTPDVYEGSPTPVVAFLSVTSKVAASALATRIFDLIFYFSSNEWHLLLEILAILSMILGNLIAITQTSMKRMLAYSSMGQIGYIIIGIIAGDSKNGYASMITYMLFYIFMNLGTFACIVLFGLRTGTDNIRDYAGLYTKDPFSAFSLALCLLSLGGIPPLAGFFGKLYLFWCGWQAGSYLLVSIGPLMSVISIYYYLKIIKLLMTERNKEITPHVQNYRRSPSSFISKNSIELSMIVCVTASTTLGIVMNPIIAIAQDTLF.

Helical transmembrane passes span 6–26 (LLLF…GLIL), 39–59 (TPWF…VLLF), 81–101 (IFRF…VEYI), 106–126 (MAIT…MVLC), 131–151 (LVTI…LSGY), 166–186 (LLMG…LYGL), 211–231 (ILIA…LVPF), 277–297 (WHLL…LIAI), 305–325 (MLAY…IAGD), 336–356 (YMLF…LFGL), 377–397 (AFSL…AGFF), 413–433 (LLVS…LKII), and 468–488 (MIVC…IIAI).

The protein belongs to the complex I subunit 2 family. As to quaternary structure, NDH is composed of at least 16 different subunits, 5 of which are encoded in the nucleus.

Its subcellular location is the plastid. It is found in the chloroplast thylakoid membrane. The enzyme catalyses a plastoquinone + NADH + (n+1) H(+)(in) = a plastoquinol + NAD(+) + n H(+)(out). It catalyses the reaction a plastoquinone + NADPH + (n+1) H(+)(in) = a plastoquinol + NADP(+) + n H(+)(out). In terms of biological role, NDH shuttles electrons from NAD(P)H:plastoquinone, via FMN and iron-sulfur (Fe-S) centers, to quinones in the photosynthetic chain and possibly in a chloroplast respiratory chain. The immediate electron acceptor for the enzyme in this species is believed to be plastoquinone. Couples the redox reaction to proton translocation, and thus conserves the redox energy in a proton gradient. The chain is NAD(P)H-quinone oxidoreductase subunit 2 B, chloroplastic from Cycas taitungensis (Prince sago).